The chain runs to 292 residues: Elongation factor Ts (292 aa).

Positions T82–V85 are involved in Mg(2+) ion dislocation from EF-Tu.

The protein belongs to the EF-Ts family.

It is found in the cytoplasm. Its function is as follows. Associates with the EF-Tu.GDP complex and induces the exchange of GDP to GTP. It remains bound to the aminoacyl-tRNA.EF-Tu.GTP complex up to the GTP hydrolysis stage on the ribosome. This chain is Elongation factor Ts, found in Bordetella petrii (strain ATCC BAA-461 / DSM 12804 / CCUG 43448).